Here is a 243-residue protein sequence, read N- to C-terminus: Proteasome subunit beta (243 aa).

Residues 1-49 (MRTPTGDLSDGPAEELGRDQPVFGPEIGEFEHSERRAAQADGEGEMKTG) constitute a propeptide, removed in mature form; by autocatalysis. A disordered region spans residues 1–50 (MRTPTGDLSDGPAEELGRDQPVFGPEIGEFEHSERRAAQADGEGEMKTGT). A compositionally biased stretch (basic and acidic residues) spans 29 to 38 (EFEHSERRAA). T50 (nucleophile) is an active-site residue.

It belongs to the peptidase T1B family. As to quaternary structure, the 20S proteasome core is composed of 14 alpha and 14 beta subunits that assemble into four stacked heptameric rings, resulting in a barrel-shaped structure. The two inner rings, each composed of seven catalytic beta subunits, are sandwiched by two outer rings, each composed of seven alpha subunits. The catalytic chamber with the active sites is on the inside of the barrel. Has a gated structure, the ends of the cylinder being occluded by the N-termini of the alpha-subunits. Is capped at one or both ends by the proteasome regulatory ATPase, PAN.

It localises to the cytoplasm. The enzyme catalyses Cleavage of peptide bonds with very broad specificity.. Its activity is regulated as follows. The formation of the proteasomal ATPase PAN-20S proteasome complex, via the docking of the C-termini of PAN into the intersubunit pockets in the alpha-rings, triggers opening of the gate for substrate entry. Interconversion between the open-gate and close-gate conformations leads to a dynamic regulation of the 20S proteasome proteolysis activity. Functionally, component of the proteasome core, a large protease complex with broad specificity involved in protein degradation. The chain is Proteasome subunit beta from Halorubrum lacusprofundi (strain ATCC 49239 / DSM 5036 / JCM 8891 / ACAM 34).